The primary structure comprises 393 residues: Pyrimidine monooxygenase RutA (393 aa).

FMN is bound by residues 79–80 (IK), Asn-145, Glu-154, 170–171 (RY), and Ser-220.

Belongs to the NtaA/SnaA/DszA monooxygenase family. RutA subfamily.

It catalyses the reaction uracil + FMNH2 + NADH + O2 = (Z)-3-ureidoacrylate + FMN + NAD(+) + H2O + H(+). It carries out the reaction thymine + FMNH2 + NADH + O2 = (Z)-2-methylureidoacrylate + FMN + NAD(+) + H2O + H(+). Its function is as follows. Catalyzes the pyrimidine ring opening between N-3 and C-4 by an unusual flavin hydroperoxide-catalyzed mechanism, adding oxygen atoms in the process to yield ureidoacrylate peracid, that immediately reacts with FMN forming ureidoacrylate and FMN-N(5)-oxide. The FMN-N(5)-oxide reacts spontaneously with NADH to produce FMN. Requires the flavin reductase RutF to regenerate FMN in vivo. The polypeptide is Pyrimidine monooxygenase RutA (Escherichia coli O139:H28 (strain E24377A / ETEC)).